The chain runs to 63 residues: Beta-toxin NaTx36 (63 aa).

Positions lysine 1–arginine 62 constitute an LCN-type CS-alpha/beta domain. 4 disulfides stabilise this stretch: cysteine 11-cysteine 61, cysteine 15-cysteine 36, cysteine 22-cysteine 43, and cysteine 26-cysteine 45.

This sequence belongs to the long (4 C-C) scorpion toxin superfamily. Sodium channel inhibitor family. Beta subfamily. As to expression, expressed by the venom gland.

The protein resides in the secreted. Its function is as follows. Beta toxins bind sodium channels (Nav) and shift the voltage of activation towards more negative potentials thereby affecting sodium channel activation and promoting spontaneous and repetitive firing. Only when tested on grasshopper mouse channels, this toxin inhibits Nav1.8/SCN10A sodium currents in a concentration and voltage-dependent manner (IC(50)=680 nM). This toxin hyperpolarizes the voltage dependence of Nav1.8/SCN10A activation, as well as steady-state fast inactivation and slow inactivation. In contrast to most beta scorpion toxins, this toxin inhibits grasshopper mouse Nav1.8/SCN10A currents through modulation of the domain I S4 voltage sensor, and the domain II second S5-S6 extracellular pore loop. This Centruroides sculpturatus (Arizona bark scorpion) protein is Beta-toxin NaTx36.